We begin with the raw amino-acid sequence, 436 residues long: GTPase Obg (436 aa).

One can recognise an Obg domain in the interval 2-160 (SMFLDTAKIK…RELQLELKIL (159 aa)). Residues 161 to 338 (ADVGLVGFPS…LLDATAELLD (178 aa)) enclose the OBG-type G domain. GTP-binding positions include 167-174 (GFPSVGKS), 192-196 (FTTIV), 214-217 (DLPG), 284-287 (NKMD), and 319-321 (SGL). Residues Ser174 and Thr194 each contribute to the Mg(2+) site. One can recognise an OCT domain in the interval 358-436 (GFDEEEKAFE…IGKFEFEFVD (79 aa)).

It belongs to the TRAFAC class OBG-HflX-like GTPase superfamily. OBG GTPase family. Monomer. It depends on Mg(2+) as a cofactor.

Its subcellular location is the cytoplasm. Functionally, an essential GTPase which binds GTP, GDP and possibly (p)ppGpp with moderate affinity, with high nucleotide exchange rates and a fairly low GTP hydrolysis rate. Plays a role in control of the cell cycle, stress response, ribosome biogenesis and in those bacteria that undergo differentiation, in morphogenesis control. This chain is GTPase Obg, found in Streptococcus pneumoniae (strain CGSP14).